Here is a 229-residue protein sequence, read N- to C-terminus: Enolase-phosphatase E1 (229 aa).

Over residues 208–218 the composition is skewed to polar residues; sequence DTQSTHRQVSS. Residues 208–229 are disordered; sequence DTQSTHRQVSSFDDIHPEQIPT. A compositionally biased stretch (basic and acidic residues) spans 220 to 229; sequence DDIHPEQIPT.

This sequence belongs to the HAD-like hydrolase superfamily. MasA/MtnC family. In terms of assembly, monomer. Requires Mg(2+) as cofactor.

It carries out the reaction 5-methylsulfanyl-2,3-dioxopentyl phosphate + H2O = 1,2-dihydroxy-5-(methylsulfanyl)pent-1-en-3-one + phosphate. It participates in amino-acid biosynthesis; L-methionine biosynthesis via salvage pathway; L-methionine from S-methyl-5-thio-alpha-D-ribose 1-phosphate: step 3/6. Its pathway is amino-acid biosynthesis; L-methionine biosynthesis via salvage pathway; L-methionine from S-methyl-5-thio-alpha-D-ribose 1-phosphate: step 4/6. In terms of biological role, bifunctional enzyme that catalyzes the enolization of 2,3-diketo-5-methylthiopentyl-1-phosphate (DK-MTP-1-P) into the intermediate 2-hydroxy-3-keto-5-methylthiopentenyl-1-phosphate (HK-MTPenyl-1-P), which is then dephosphorylated to form the acireductone 1,2-dihydroxy-3-keto-5-methylthiopentene (DHK-MTPene). In Cronobacter sakazakii (Enterobacter sakazakii), this protein is Enolase-phosphatase E1.